The chain runs to 77 residues: Acyl carrier protein (77 aa).

One can recognise a Carrier domain in the interval 1–76 (MENFDKVKDI…DAVNFINNLE (76 aa)). Ser-36 bears the O-(pantetheine 4'-phosphoryl)serine mark.

It belongs to the acyl carrier protein (ACP) family. In terms of processing, 4'-phosphopantetheine is transferred from CoA to a specific serine of apo-ACP by AcpS. This modification is essential for activity because fatty acids are bound in thioester linkage to the sulfhydryl of the prosthetic group.

Its subcellular location is the cytoplasm. Its pathway is lipid metabolism; fatty acid biosynthesis. Carrier of the growing fatty acid chain in fatty acid biosynthesis. The sequence is that of Acyl carrier protein from Staphylococcus carnosus (strain TM300).